We begin with the raw amino-acid sequence, 219 residues long: Leucyl/phenylalanyl-tRNA--protein transferase (219 aa).

It belongs to the L/F-transferase family.

It localises to the cytoplasm. It catalyses the reaction N-terminal L-lysyl-[protein] + L-leucyl-tRNA(Leu) = N-terminal L-leucyl-L-lysyl-[protein] + tRNA(Leu) + H(+). The enzyme catalyses N-terminal L-arginyl-[protein] + L-leucyl-tRNA(Leu) = N-terminal L-leucyl-L-arginyl-[protein] + tRNA(Leu) + H(+). It carries out the reaction L-phenylalanyl-tRNA(Phe) + an N-terminal L-alpha-aminoacyl-[protein] = an N-terminal L-phenylalanyl-L-alpha-aminoacyl-[protein] + tRNA(Phe). Functionally, functions in the N-end rule pathway of protein degradation where it conjugates Leu, Phe and, less efficiently, Met from aminoacyl-tRNAs to the N-termini of proteins containing an N-terminal arginine or lysine. In Leptospira borgpetersenii serovar Hardjo-bovis (strain JB197), this protein is Leucyl/phenylalanyl-tRNA--protein transferase.